We begin with the raw amino-acid sequence, 339 residues long: Phenylalanine--tRNA ligase alpha subunit (339 aa).

Position 250 (Glu250) interacts with Mg(2+).

The protein belongs to the class-II aminoacyl-tRNA synthetase family. Phe-tRNA synthetase alpha subunit type 1 subfamily. In terms of assembly, tetramer of two alpha and two beta subunits. Mg(2+) serves as cofactor.

The protein resides in the cytoplasm. The catalysed reaction is tRNA(Phe) + L-phenylalanine + ATP = L-phenylalanyl-tRNA(Phe) + AMP + diphosphate + H(+). The sequence is that of Phenylalanine--tRNA ligase alpha subunit from Christiangramia forsetii (strain DSM 17595 / CGMCC 1.15422 / KT0803) (Gramella forsetii).